The sequence spans 166 residues: MVSFKLPAFLCVAVLSSMALVSHGAVLGLCEGACPEGWVEHKNRCYLHVAEKKTWLDAELNCLHHGGNLASEHSEDEHQFLKDLHKGSDDPFWIGLSAVHEGRSWLWSDGTSASAEGDFSMWNPGEPNDAGGKEDCVHDNYGGQKHWNDIKCDLLFPSICVLRMVE.

An N-terminal signal peptide occupies residues 1–24 (MVSFKLPAFLCVAVLSSMALVSHG). 3 cysteine pairs are disulfide-bonded: cysteine 34/cysteine 45, cysteine 62/cysteine 160, and cysteine 136/cysteine 152. The C-type lectin domain occupies 41-161 (HKNRCYLHVA…CDLLFPSICV (121 aa)).

In terms of assembly, homodimer; disulfide-linked. As to expression, skin; contained within club cells which are a component of the epidermis in combination with epithelial cells and mucus cells (at protein level).

The protein resides in the secreted. In terms of biological role, involved in host defense at the body surface. Causes agglutination and suppresses the growth of the Gram-negative bacterium E.coli K12. Possesses calcium-independent hemagglutinating activity. The protein is Lactose-binding lectin l-2 of Anguilla japonica (Japanese eel).